The sequence spans 89 residues: RNA-binding protein Hfq (89 aa).

The Sm domain maps to 14 to 73 (DPYLNALRKEKINVAIYLVNGVKLQGRVDSFDQFVVLLRSNVTQMVYKHAISTIVPARDP).

Belongs to the Hfq family. As to quaternary structure, homohexamer.

Its function is as follows. RNA chaperone that binds small regulatory RNA (sRNAs) and mRNAs to facilitate mRNA translational regulation in response to envelope stress, environmental stress and changes in metabolite concentrations. Also binds with high specificity to tRNAs. The polypeptide is RNA-binding protein Hfq (Hydrogenovibrio crunogenus (strain DSM 25203 / XCL-2) (Thiomicrospira crunogena)).